Consider the following 66-residue polypeptide: 14-3-3-like protein 2 (66 aa).

The protein belongs to the 14-3-3 family.

In Pseudotsuga menziesii (Douglas-fir), this protein is 14-3-3-like protein 2.